The sequence spans 892 residues: Alanine--tRNA ligase (892 aa).

The Zn(2+) site is built by His577, His581, Cys680, and His684.

It belongs to the class-II aminoacyl-tRNA synthetase family. Zn(2+) serves as cofactor.

The protein localises to the cytoplasm. The catalysed reaction is tRNA(Ala) + L-alanine + ATP = L-alanyl-tRNA(Ala) + AMP + diphosphate. Functionally, catalyzes the attachment of alanine to tRNA(Ala) in a two-step reaction: alanine is first activated by ATP to form Ala-AMP and then transferred to the acceptor end of tRNA(Ala). Also edits incorrectly charged Ser-tRNA(Ala) and Gly-tRNA(Ala) via its editing domain. This is Alanine--tRNA ligase from Arthrobacter sp. (strain FB24).